The sequence spans 532 residues: 2-isopropylmalate synthase (532 aa).

Residues 5–267 (VIIFDTTLRD…HTNINHQEIY (263 aa)) enclose the Pyruvate carboxyltransferase domain. Mn(2+)-binding residues include D14, H202, H204, and N238. Residues 392–532 (HLDYFSVQSG…SKQQNSQETV (141 aa)) are regulatory domain. Residues 513-532 (QQHNNQQQNDSKQQNSQETV) form a disordered region.

The protein belongs to the alpha-IPM synthase/homocitrate synthase family. LeuA type 1 subfamily. In terms of assembly, homodimer. The cofactor is Mn(2+).

It is found in the cytoplasm. It carries out the reaction 3-methyl-2-oxobutanoate + acetyl-CoA + H2O = (2S)-2-isopropylmalate + CoA + H(+). It functions in the pathway amino-acid biosynthesis; L-leucine biosynthesis; L-leucine from 3-methyl-2-oxobutanoate: step 1/4. In terms of biological role, catalyzes the condensation of the acetyl group of acetyl-CoA with 3-methyl-2-oxobutanoate (2-ketoisovalerate) to form 3-carboxy-3-hydroxy-4-methylpentanoate (2-isopropylmalate). The sequence is that of 2-isopropylmalate synthase from Pectobacterium atrosepticum (strain SCRI 1043 / ATCC BAA-672) (Erwinia carotovora subsp. atroseptica).